We begin with the raw amino-acid sequence, 370 residues long: Peptide chain release factor 2 (370 aa).

Position 249 is an N5-methylglutamine (Q249).

The protein belongs to the prokaryotic/mitochondrial release factor family. In terms of processing, methylated by PrmC. Methylation increases the termination efficiency of RF2.

It localises to the cytoplasm. Functionally, peptide chain release factor 2 directs the termination of translation in response to the peptide chain termination codons UGA and UAA. The sequence is that of Peptide chain release factor 2 from Kosmotoga olearia (strain ATCC BAA-1733 / DSM 21960 / TBF 19.5.1).